Here is a 329-residue protein sequence, read N- to C-terminus: MSLTKCASKLEIDRLISLNFRINQIIVLIPVFITFIFTYYAIKVVQKKSIFELSTKFLLIQNFFSANLHQVLYAIETIRRLHISLFETNQPCIPLKTEFECRLYLEVFVSGVAGMVYGQTGLLLERACATFIKNYEEKKSVRTGLAISVSVLCLSFITSRLIIWDDPLDGYQLTCISFPSDSVDRSSYFQSICTLLALFNLVTSILIWKYNKKFEYSTPFVVGPRFRKREVIDSTSTICFLTFVQFIFFLVYSLGFFIIKSIREIISYENYYLVAVWLYTPPYIAASFPILIFYRIRSSYANRVLIIKKFTNTKQTIEEHIQQMKNAWK.

6 consecutive transmembrane segments (helical) span residues Ile-25–Val-45, Leu-103–Leu-123, Gly-144–Trp-164, Tyr-188–Trp-208, Ile-238–Ile-258, and Leu-273–Phe-293.

The protein belongs to the nematode receptor-like protein sra family.

The protein resides in the membrane. In Caenorhabditis elegans, this protein is Serpentine receptor class alpha-4 (sra-4).